The chain runs to 166 residues: AP-3 complex subunit sigma (166 aa).

Belongs to the adaptor complexes small subunit family. As to quaternary structure, adaptor protein complex 3 (AP-3) is a heterotetramer composed of two large adaptins (delta-type subunit and beta-type subunit), a medium adaptin (mu-type subunit) and a small adaptin (sigma-type subunit).

Its subcellular location is the cytoplasm. It localises to the golgi apparatus. The protein resides in the cytoplasmic vesicle membrane. Functionally, part of the AP-3 complex, an adaptor-related complex which seems to be clathrin-associated. The complex is associated with the Golgi region as well as more peripheral structures. It facilitates the budding of vesicles from the Golgi membrane and may be directly involved in trafficking to the vacuole. It also function in maintaining the identity of lytic vacuoles and in regulating the transition between storage and lytic vacuoles. The chain is AP-3 complex subunit sigma from Arabidopsis thaliana (Mouse-ear cress).